We begin with the raw amino-acid sequence, 821 residues long: Leucine--tRNA ligase (821 aa).

The 'HIGH' region motif lies at 44–54 (PYPSGRIHMGH). Positions 589–593 (KMSKS) match the 'KMSKS' region motif. Position 592 (Lys592) interacts with ATP.

It belongs to the class-I aminoacyl-tRNA synthetase family.

The protein localises to the cytoplasm. The enzyme catalyses tRNA(Leu) + L-leucine + ATP = L-leucyl-tRNA(Leu) + AMP + diphosphate. The protein is Leucine--tRNA ligase of Campylobacter concisus (strain 13826).